Reading from the N-terminus, the 85-residue chain is Small ribosomal subunit protein uS17 (85 aa).

This sequence belongs to the universal ribosomal protein uS17 family. In terms of assembly, part of the 30S ribosomal subunit.

In terms of biological role, one of the primary rRNA binding proteins, it binds specifically to the 5'-end of 16S ribosomal RNA. This is Small ribosomal subunit protein uS17 from Pasteurella multocida (strain Pm70).